The primary structure comprises 202 residues: Solute carrier family 66 member 3 (202 aa).

The N-terminal stretch at 1-19 (MEAALLGLCNWSTLGVCAA) is a signal peptide. 4 helical membrane passes run 33-53 (SARGLSLPSLLLELAGFLVFL), 64-84 (LTYLEYPILIAQDVILLLCIF), 97-117 (IAVLVSSWFILALQKWIIDLA), and 171-191 (FTILLRFVIMLALNIWVTVTV).

The protein localises to the membrane. In Homo sapiens (Human), this protein is Solute carrier family 66 member 3.